We begin with the raw amino-acid sequence, 381 residues long: Probable serine/threonine-protein kinase PBL22 (381 aa).

The S-palmitoyl cysteine moiety is linked to residue cysteine 3. Position 64 is a phosphothreonine (threonine 64). In terms of domain architecture, Protein kinase spans 75 to 351 (FREGNIIGKG…GDVVVAFEYI (277 aa)). ATP contacts are provided by residues 81-89 (IGKGGFGSV) and lysine 103. Tyrosine 148 carries the phosphotyrosine modification. The active-site Proton acceptor is the aspartate 201. A Phosphoserine modification is found at serine 235. Phosphothreonine occurs at positions 236 and 241. Tyrosine 249 carries the phosphotyrosine modification. The disordered stretch occupies residues 361-381 (RRTARKSTDSNRLRRETKQSY).

Belongs to the protein kinase superfamily. Ser/Thr protein kinase family. In terms of processing, palmitoylation at Cys-3 and Cys-6 are required for plasma membrane location.

The protein localises to the cell membrane. It carries out the reaction L-seryl-[protein] + ATP = O-phospho-L-seryl-[protein] + ADP + H(+). The catalysed reaction is L-threonyl-[protein] + ATP = O-phospho-L-threonyl-[protein] + ADP + H(+). May be involved in plant defense signaling. In Arabidopsis thaliana (Mouse-ear cress), this protein is Probable serine/threonine-protein kinase PBL22.